Consider the following 24-residue polypeptide: Retinol-binding protein 3 (24 aa).

The protein resides in the secreted. It localises to the extracellular space. Its subcellular location is the extracellular matrix. It is found in the interphotoreceptor matrix. IRBP shuttles 11-cis and all trans retinoids between the retinol isomerase in the pigment epithelium and the visual pigments in the photoreceptor cells of the retina. The polypeptide is Retinol-binding protein 3 (RBP3) (Ovis aries (Sheep)).